Reading from the N-terminus, the 326-residue chain is Putative HTH-type transcriptional regulatory protein MmarC7_1702 (326 aa).

The HTH cro/C1-type domain occupies 128 to 183; it reads LRETREKLKISVGELAEISRVSRKTIYKYEQNEANPSAEVAIKIEEYLDVPLIKGI. A DNA-binding region (H-T-H motif) is located at residues 139–158; sequence VGELAEISRVSRKTIYKYEQ.

The protein is Putative HTH-type transcriptional regulatory protein MmarC7_1702 of Methanococcus maripaludis (strain C7 / ATCC BAA-1331).